Here is a 403-residue protein sequence, read N- to C-terminus: Ribosomal RNA large subunit methyltransferase I (403 aa).

One can recognise a PUA domain in the interval 9 to 88 (YPRLVLSKGR…ESIDIAFFTR (80 aa)).

Belongs to the methyltransferase superfamily. RlmI family.

It localises to the cytoplasm. The enzyme catalyses cytidine(1962) in 23S rRNA + S-adenosyl-L-methionine = 5-methylcytidine(1962) in 23S rRNA + S-adenosyl-L-homocysteine + H(+). Its function is as follows. Specifically methylates the cytosine at position 1962 (m5C1962) of 23S rRNA. In Salmonella typhi, this protein is Ribosomal RNA large subunit methyltransferase I.